We begin with the raw amino-acid sequence, 638 residues long: Exocyst complex component EXO70A1 (638 aa).

A disordered region spans residues 163-190 (FDGLPNSLRPSSDGDGGGKPHGGHHNDD).

It belongs to the EXO70 family. In terms of assembly, the exocyst complex is composed of SEC3, SEC5, SEC6, SEC8, SEC10, EXO70A1 and EXO84B. Interacts with SEC3A and EXO84B. Co-localizes with FPP3/VETH1, FPP2/VETH2 and COG2 in vesicle-like small motile compartments. May interact with COG2.

It localises to the cytoplasm. The protein localises to the cytosol. Its subcellular location is the cytoskeleton. It is found in the phragmoplast. The protein resides in the cell membrane. It localises to the secreted. The protein localises to the cell wall. Functionally, component of the exocyst complex involved in the docking of exocytic vesicles with fusion sites on the plasma membrane during regulated or polarized secretion. Involved in polarized cell growth and organ morphogenesis. Involved in polarized cell growth and organ morphogenesis. During cytokinesis, involved in cell plate initiation, cell plate maturation and formation of new primary cell wall. Participates in polarized pectin delivery required for the polarized development of the mucilage-producing volcano cells of the seed coat. Involved in the recycling and localization of auxin efflux carriers PIN1 and PIN2, and thus in polar auxin transport regulation. Functions in vesicle trafficking in tracheary elements to regulate patterned secondary cell wall (SCW) thickening. The chain is Exocyst complex component EXO70A1 from Arabidopsis thaliana (Mouse-ear cress).